The sequence spans 464 residues: MKTRIETDSMGEIAVDDSKYWGAQTERSLHHFHIGNDRFPREMIRALGILKKSAAVVNAELGLLSEDKKKLIVQAADEVISGKLDEHFPLSVWQTGSGTQTNMNSNEVISNRAIEIAGGVKGSKKPIHPNDDVNKAQSSNDTFPTAMHIAAAEQLNQKLIPALIQLKETFKKKTDEFQNIIKIGRTHLQDATPLTLGQEFSGYVQQLEYNIARVKAVLPSVYRLALGGTAVGTGLNTHPQFAVKAAAQIAKETGLPFVSAENKFEALAAHDSLVETSGVLKTIAASLMKIANDIRWLSSGPRCGIGEISIPENEPGSSIMPGKVNPTQSEQMTMVAAQVIANDVAVNIGGASGNFELNVFKPLIIHNVLNSIRLLSDSCVSFEEHCARGIIPNKEKLNEHLNNSLMLVTALNPHIGYDNAAKIAKNAHKKGTTLKESGIELGLLTSEQFDQWVLPEKMIHPSVD.

Substrate is bound by residues 97-99 (SGT), 128-131 (HPND), 138-140 (SSN), and Thr-186. His-187 acts as the Proton donor/acceptor in catalysis. The active site involves Ser-317. Substrate is bound by residues Ser-318 and 323–325 (KVN).

The protein belongs to the class-II fumarase/aspartase family. Fumarase subfamily. In terms of assembly, homotetramer.

The protein localises to the cytoplasm. It catalyses the reaction (S)-malate = fumarate + H2O. It functions in the pathway carbohydrate metabolism; tricarboxylic acid cycle; (S)-malate from fumarate: step 1/1. Functionally, involved in the TCA cycle. Catalyzes the stereospecific interconversion of fumarate to L-malate. The chain is Fumarate hydratase class II from Leptospira interrogans serogroup Icterohaemorrhagiae serovar copenhageni (strain Fiocruz L1-130).